Consider the following 255-residue polypeptide: Geranylgeranylglyceryl phosphate synthase (255 aa).

Residues Asp-31 and Ser-60 each coordinate Mg(2+). Residues 179-185 (YLEAGSG), 211-212 (GG), and 233-234 (GT) contribute to the sn-glycerol 1-phosphate site.

This sequence belongs to the GGGP/HepGP synthase family. Group II subfamily. Mg(2+) serves as cofactor.

It is found in the cytoplasm. It catalyses the reaction sn-glycerol 1-phosphate + (2E,6E,10E)-geranylgeranyl diphosphate = sn-3-O-(geranylgeranyl)glycerol 1-phosphate + diphosphate. Its pathway is membrane lipid metabolism; glycerophospholipid metabolism. Functionally, prenyltransferase that catalyzes the transfer of the geranylgeranyl moiety of geranylgeranyl diphosphate (GGPP) to the C3 hydroxyl of sn-glycerol-1-phosphate (G1P). This reaction is the first ether-bond-formation step in the biosynthesis of archaeal membrane lipids. The polypeptide is Geranylgeranylglyceryl phosphate synthase (Methanothrix thermoacetophila (strain DSM 6194 / JCM 14653 / NBRC 101360 / PT) (Methanosaeta thermophila)).